The following is a 305-amino-acid chain: D-alanine--D-alanine ligase (305 aa).

In terms of domain architecture, ATP-grasp spans 104–300; it reads RALFASAGIP…FPELVRWMVE (197 aa). 131 to 181 is an ATP binding site; that stretch reads LPRPFVVKPLNEGSSVGVFIVRDNQPSPLPDWPFDADEVLVESFIPGRELT. Positions 249, 267, and 269 each coordinate Mg(2+).

This sequence belongs to the D-alanine--D-alanine ligase family. The cofactor is Mg(2+). Mn(2+) serves as cofactor.

Its subcellular location is the cytoplasm. The catalysed reaction is 2 D-alanine + ATP = D-alanyl-D-alanine + ADP + phosphate + H(+). The protein operates within cell wall biogenesis; peptidoglycan biosynthesis. In terms of biological role, cell wall formation. In Paramagnetospirillum magneticum (strain ATCC 700264 / AMB-1) (Magnetospirillum magneticum), this protein is D-alanine--D-alanine ligase.